The chain runs to 204 residues: Holliday junction branch migration complex subunit RuvA (204 aa).

The domain I stretch occupies residues 1–63 (MIGKLSGKVD…EEHIHLYGFL (63 aa)). A domain II region spans residues 64-142 (TLEEKIFFNL…KISSGSAIIK (79 aa)). Residues 143–149 (ESLNIKN) are flexible linker. A domain III region spans residues 150 to 204 (ITPVASNEVIKALVNLGFSRFEAQNAVQGIITQNPEISIDELIKTALKNRNSNFS).

Belongs to the RuvA family. As to quaternary structure, homotetramer. Forms an RuvA(8)-RuvB(12)-Holliday junction (HJ) complex. HJ DNA is sandwiched between 2 RuvA tetramers; dsDNA enters through RuvA and exits via RuvB. An RuvB hexamer assembles on each DNA strand where it exits the tetramer. Each RuvB hexamer is contacted by two RuvA subunits (via domain III) on 2 adjacent RuvB subunits; this complex drives branch migration. In the full resolvosome a probable DNA-RuvA(4)-RuvB(12)-RuvC(2) complex forms which resolves the HJ.

It localises to the cytoplasm. The RuvA-RuvB-RuvC complex processes Holliday junction (HJ) DNA during genetic recombination and DNA repair, while the RuvA-RuvB complex plays an important role in the rescue of blocked DNA replication forks via replication fork reversal (RFR). RuvA specifically binds to HJ cruciform DNA, conferring on it an open structure. The RuvB hexamer acts as an ATP-dependent pump, pulling dsDNA into and through the RuvAB complex. HJ branch migration allows RuvC to scan DNA until it finds its consensus sequence, where it cleaves and resolves the cruciform DNA. The chain is Holliday junction branch migration complex subunit RuvA from Rickettsia rickettsii (strain Iowa).